We begin with the raw amino-acid sequence, 248 residues long: Probable phosphatase Sfri_3709 (248 aa).

Zn(2+)-binding residues include His-8, His-10, His-16, His-41, Glu-74, His-102, His-132, Asp-193, and His-195.

The protein belongs to the PHP family. It depends on Zn(2+) as a cofactor.

This is Probable phosphatase Sfri_3709 from Shewanella frigidimarina (strain NCIMB 400).